A 493-amino-acid polypeptide reads, in one-letter code: Arginine decarboxylase (493 aa).

Lys229 carries the N6-(pyridoxal phosphate)lysine modification.

Belongs to the Orn/Lys/Arg decarboxylase class-I family. It depends on pyridoxal 5'-phosphate as a cofactor.

The protein localises to the cytoplasm. It carries out the reaction L-arginine + H(+) = agmatine + CO2. It participates in amine and polyamine biosynthesis; agmatine biosynthesis; agmatine from L-arginine: step 1/1. Its function is as follows. Catalyzes the formation of agmatine from arginine. This Bacillus anthracis protein is Arginine decarboxylase (speA).